Reading from the N-terminus, the 363-residue chain is NAD(P)H-quinone oxidoreductase subunit 1, chloroplastic (363 aa).

6 helical membrane passes run 30–50 (LVPI…IVWL), 98–118 (FSIG…VIPF), 129–149 (IGIF…LMSG), 248–268 (YSGI…LLSS), 300–320 (IIGT…FLFI), and 343–363 (FLLP…LLSL).

Belongs to the complex I subunit 1 family. NDH is composed of at least 16 different subunits, 5 of which are encoded in the nucleus.

The protein localises to the plastid. The protein resides in the chloroplast thylakoid membrane. The catalysed reaction is a plastoquinone + NADH + (n+1) H(+)(in) = a plastoquinol + NAD(+) + n H(+)(out). It carries out the reaction a plastoquinone + NADPH + (n+1) H(+)(in) = a plastoquinol + NADP(+) + n H(+)(out). In terms of biological role, NDH shuttles electrons from NAD(P)H:plastoquinone, via FMN and iron-sulfur (Fe-S) centers, to quinones in the photosynthetic chain and possibly in a chloroplast respiratory chain. The immediate electron acceptor for the enzyme in this species is believed to be plastoquinone. Couples the redox reaction to proton translocation, and thus conserves the redox energy in a proton gradient. This chain is NAD(P)H-quinone oxidoreductase subunit 1, chloroplastic, found in Gossypium hirsutum (Upland cotton).